A 221-amino-acid chain; its full sequence is Interleukin-12 subunit alpha (221 aa).

The N-terminal stretch at 1-25 (MCPLRSLLLISTLVLLHHLPHLSLG) is a signal peptide. 3 disulfide bridges follow: C39–C112, C66–C198, and C87–C125. A glycan (N-linked (GlcNAc...) asparagine) is linked at N95.

It belongs to the IL-6 superfamily. In terms of assembly, heterodimer with IL12B; disulfide-linked. This heterodimer is known as interleukin IL-12. Heterodimer with EBI3/IL27B; not disulfide-linked. This heterodimer is known as interleukin IL-35. Interacts with NBR1; this interaction promotes IL-12 secretion.

The protein localises to the secreted. In terms of biological role, heterodimerizes with IL12B to form the IL-12 cytokine or with EBI3/IL27B to form the IL-35 cytokine. IL-12 is primarily produced by professional antigen-presenting cells (APCs) such as B-cells and dendritic cells (DCs) as well as macrophages and granulocytes and regulates T-cell and natural killer-cell responses, induces the production of interferon-gamma (IFN-gamma), favors the differentiation of T-helper 1 (Th1) cells and is an important link between innate resistance and adaptive immunity. Mechanistically, exerts its biological effects through a receptor composed of IL12R1 and IL12R2 subunits. Binding to the receptor results in the rapid tyrosine phosphorylation of a number of cellular substrates including the JAK family kinases TYK2 and JAK2. In turn, recruited STAT4 gets phosphorylated and translocates to the nucleus where it regulates cytokine/growth factor responsive genes. As part of IL-35, plays essential roles in maintaining the immune homeostasis of the liver microenvironment and also functions as an immune-suppressive cytokine. Mediates biological events through unconventional receptors composed of IL12RB2 and gp130/IL6ST heterodimers or homodimers. Signaling requires the transcription factors STAT1 and STAT4, which form a unique heterodimer that binds to distinct DNA sites. The protein is Interleukin-12 subunit alpha (IL12A) of Bos taurus (Bovine).